The primary structure comprises 359 residues: 3-dehydroquinate synthase (359 aa).

NAD(+)-binding positions include 72 to 77, 106 to 110, 130 to 131, Lys143, Lys152, and 170 to 173; these read EGEEHK, GVVGD, TT, and TLTT. Zn(2+)-binding residues include Glu185, His248, and His265.

Belongs to the sugar phosphate cyclases superfamily. Dehydroquinate synthase family. Co(2+) is required as a cofactor. It depends on Zn(2+) as a cofactor. The cofactor is NAD(+).

It is found in the cytoplasm. The enzyme catalyses 7-phospho-2-dehydro-3-deoxy-D-arabino-heptonate = 3-dehydroquinate + phosphate. Its pathway is metabolic intermediate biosynthesis; chorismate biosynthesis; chorismate from D-erythrose 4-phosphate and phosphoenolpyruvate: step 2/7. Functionally, catalyzes the conversion of 3-deoxy-D-arabino-heptulosonate 7-phosphate (DAHP) to dehydroquinate (DHQ). The sequence is that of 3-dehydroquinate synthase from Pelobacter propionicus (strain DSM 2379 / NBRC 103807 / OttBd1).